The following is a 171-amino-acid chain: S-ribosylhomocysteine lyase (171 aa).

Positions 54, 58, and 128 each coordinate Fe cation.

It belongs to the LuxS family. As to quaternary structure, homodimer. It depends on Fe cation as a cofactor.

The catalysed reaction is S-(5-deoxy-D-ribos-5-yl)-L-homocysteine = (S)-4,5-dihydroxypentane-2,3-dione + L-homocysteine. In terms of biological role, involved in the synthesis of autoinducer 2 (AI-2) which is secreted by bacteria and is used to communicate both the cell density and the metabolic potential of the environment. The regulation of gene expression in response to changes in cell density is called quorum sensing. Catalyzes the transformation of S-ribosylhomocysteine (RHC) to homocysteine (HC) and 4,5-dihydroxy-2,3-pentadione (DPD). The protein is S-ribosylhomocysteine lyase of Escherichia coli O157:H7.